The chain runs to 141 residues: Hemoglobin subunit alpha-2 (141 aa).

N-acetylserine is present on Ser-1. Residues 1 to 141 (SLSTKDKETV…LARALSEKYR (141 aa)) enclose the Globin domain. His-59 provides a ligand contact to O2. Heme b is bound at residue His-88.

It belongs to the globin family. As to quaternary structure, hb2 is a heterotetramer of two alpha-2 chains and two beta chains. As to expression, red blood cells.

Functionally, involved in oxygen transport from gills to the various peripheral tissues. The protein is Hemoglobin subunit alpha-2 (hba2) of Notothenia angustata (Rockcod).